Here is a 404-residue protein sequence, read N- to C-terminus: Cysteine desulfurase IscS (404 aa).

Residues 75-76 (AT), Asn155, Gln183, and 203-205 (SAH) contribute to the pyridoxal 5'-phosphate site. The residue at position 206 (Lys206) is an N6-(pyridoxal phosphate)lysine. Pyridoxal 5'-phosphate is bound at residue Thr243. Cys328 acts as the Cysteine persulfide intermediate in catalysis. Cys328 is a binding site for [2Fe-2S] cluster.

It belongs to the class-V pyridoxal-phosphate-dependent aminotransferase family. NifS/IscS subfamily. As to quaternary structure, homodimer. Forms a heterotetramer with IscU, interacts with other sulfur acceptors. Requires pyridoxal 5'-phosphate as cofactor.

It is found in the cytoplasm. It catalyses the reaction (sulfur carrier)-H + L-cysteine = (sulfur carrier)-SH + L-alanine. Its pathway is cofactor biosynthesis; iron-sulfur cluster biosynthesis. Master enzyme that delivers sulfur to a number of partners involved in Fe-S cluster assembly, tRNA modification or cofactor biosynthesis. Catalyzes the removal of elemental sulfur atoms from cysteine to produce alanine. Functions as a sulfur delivery protein for Fe-S cluster synthesis onto IscU, an Fe-S scaffold assembly protein, as well as other S acceptor proteins. The protein is Cysteine desulfurase IscS of Colwellia psychrerythraea (strain 34H / ATCC BAA-681) (Vibrio psychroerythus).